A 162-amino-acid chain; its full sequence is Onchocystatin (162 aa).

A signal peptide spans 1-32 (MLTIKDGTLLIHLLLFSVVALVQLQGAKSARA). The disordered stretch occupies residues 30–54 (ARAKNPSKMESKTGENQDRPVLLGG). Positions 36–47 (SKMESKTGENQD) are enriched in basic and acidic residues. The Secondary area of contact motif lies at 97–101 (QVVAG). The cysteines at positions 115 and 128 are disulfide-linked.

The protein belongs to the cystatin family. In terms of tissue distribution, expressed in the cuticle of L3 and L4 larvae, female adult, and in the eggshell of developing microfilariae.

Functionally, cysteine protease inhibitor which inhibits members of the peptidase C1 family. In the human host, inhibits CTSL/cathepsin L and CTSS/cathepsin S and to a lesser extent CTSB/cathepsin B which may cause defects in antigen processing and thereby impair antigen-driven T cell proliferation. The chain is Onchocystatin from Onchocerca volvulus.